Here is a 316-residue protein sequence, read N- to C-terminus: Probable thioesterase lcsE (316 aa).

The protein belongs to the AMT4 thioesterase family.

The protein operates within secondary metabolite biosynthesis. In terms of biological role, probable thioesterase; part of the gene cluster that mediates the biosynthesis of the lipopeptide antibiotics leucinostatins that show extensive biological activities, including antimalarial, antiviral, antibacterial, antifungal, and antitumor activities, as well as phytotoxic. Leucinostatin A contains nine amino acid residues, including the unusual amino acid 4-methyl-L-proline (MePro), 2-amino-6-hydroxy-4-methyl-8-oxodecanoic acid (AHyMeOA), 3-hydroxyleucine (HyLeu), alpha-aminoisobutyric acid (AIB), beta-Ala, a 4-methylhex-2-enoic acid at the N-terminus as well as a N1,N1-dimethylpropane-1,2-diamine (DPD) at the C-terminus. The biosynthesis of leucinostatins is probably initiated with the assembly of 4-methylhex-2-enoic acid by a reducing PKS. Two reducing polyketide synthases, lcsB and lcsC, have been identified in the cluster and it is not clear which is the one that assembles 4-methylhex-2-enoic acid since both contain KS, AT, DH, cMT, ER, KR and ACP domains. The polyketide residue might be transferred to the NRPS lcsA, mediated by two additional enzymes, the acyl-CoA ligase lcsD and the thioesterase lcsE. The linear polyketide carboxylic acid, which is released from PKS, is converted to a CoA thioester by lcsD, and then lcsE hydrolyzes the thiol bond and shuttles the polyketide intermediate to lcsA. The C domain of the first module catalyzed the condensation of 4-methylhex-2-enoic acid and MePro carried by domain A1, followed by successive condensations of nine amino acids to trigger the elongation of the linear peptide. A5 and A6 domains of lcsA are proposed to incorporate leucine, A2 AHyMeOA, and A3 incorporates HyLeu. A4, A7 and A8 incorporate AIB. The AHyMeOA in leucinostatin A activated by the A2 might be produced by the second PKS (lcsB or lcsC) present within the cluster. The MePro is probably produced via leucine cyclization and may originate from a separate pathway, independent of the cluster. Another nonproteinogenic amino acid, beta-Ala, could be produced by an aspartic acid decarboxylase also localized outside of the cluster. Two candidates are VFPBJ_01400 and VFPBJ_10476. The final peptide scaffold may be released by the NAD(P)H-dependent thioester reductase (TE) at the C-terminal region of lcsA. Transamination of the lcsA product by the transaminase lcsP may produce DPD at the C-terminus. Further hydroxylation steps performed alternatively by the cytochrome P450 monooxygenases lcsI, lcsK and lcsN then yield the non-methylated leucinostatins precursor. It is also possible that leucines can be hydroxylated prior to their incorporation into the peptide. Varying extents of methylation then lead to the formation of leucinostatins A and B. The protein is Probable thioesterase lcsE of Purpureocillium lilacinum (Paecilomyces lilacinus).